Consider the following 425-residue polypeptide: Serine--tRNA ligase (425 aa).

A disordered region spans residues 110 to 134 (NLPSADAPEGKSEADNVEVKRWGEP). Basic and acidic residues predominate over residues 117 to 134 (PEGKSEADNVEVKRWGEP). L-serine is bound at residue 233–235 (TAE). 264–266 (RRE) lines the ATP pocket. Glu287 contributes to the L-serine binding site. 351–354 (EISS) provides a ligand contact to ATP. Ser385 lines the L-serine pocket.

It belongs to the class-II aminoacyl-tRNA synthetase family. Type-1 seryl-tRNA synthetase subfamily. In terms of assembly, homodimer. The tRNA molecule binds across the dimer.

It is found in the cytoplasm. It carries out the reaction tRNA(Ser) + L-serine + ATP = L-seryl-tRNA(Ser) + AMP + diphosphate + H(+). The catalysed reaction is tRNA(Sec) + L-serine + ATP = L-seryl-tRNA(Sec) + AMP + diphosphate + H(+). The protein operates within aminoacyl-tRNA biosynthesis; selenocysteinyl-tRNA(Sec) biosynthesis; L-seryl-tRNA(Sec) from L-serine and tRNA(Sec): step 1/1. Its function is as follows. Catalyzes the attachment of serine to tRNA(Ser). Is also able to aminoacylate tRNA(Sec) with serine, to form the misacylated tRNA L-seryl-tRNA(Sec), which will be further converted into selenocysteinyl-tRNA(Sec). The polypeptide is Serine--tRNA ligase (Synechococcus sp. (strain RCC307)).